Reading from the N-terminus, the 399-residue chain is Immunoglobulin heavy constant gamma 1 (399 aa).

The tract at residues 1-21 (ASTKGPSVFPLAPSSKSTSGG) is disordered. Residues 1–98 (ASTKGPSVFP…PSNTKVDKKV (98 aa)) are CH1. Residues 1 to 350 (ASTKGPSVFP…DGELDGLWTT (350 aa)) are Extracellular-facing. Ig-like domains lie at 6–99 (PSVF…KKVE), 121–220 (PSVF…KTIS), and 229–325 (PQVY…KSLS). Residues cysteine 27 and cysteine 83 are joined by a disulfide bond. The hinge stretch occupies residues 99 to 110 (EPKSCDKTHTCP). Residues 111–223 (PCPAPELLGG…PIEKTISKAK (113 aa)) form a CH2 region. Cystine bridges form between cysteine 144-cysteine 204 and cysteine 250-cysteine 308. An N-linked (GlcNAc...) (complex) asparagine glycan is attached at asparagine 180. The tract at residues 224–330 (GQPREPQVYT…QKSLSLSPEL (107 aa)) is CH3. Residues 351-371 (ITIFITLFLLSVCYSATVTFF) form a helical membrane-spanning segment. Over 372–399 (KVKWIFSSVVDLKQTIIPDYRNMIGQGA) the chain is Cytoplasmic.

As to quaternary structure, immunoglobulins are composed of two identical heavy chains and two identical light chains; disulfide-linked. Interacts with FCGR1A; this interaction mediates IgG effector functions on monocytes. Interacts with FCGR2A and FCGR3A. Post-translationally, glycosylation on Asn-180 is required for interaction with Fc receptors and ability to activate the complement pathway. (Microbial infection) Deglycosylation on Asn-180 by S.pyogenes EndoS or Endos2 endoglucosidases prevents interaction between immunoglobulin-gamma (IgG) and Fc receptors, impairing ability to activate the complement pathway.

It is found in the secreted. The protein localises to the cell membrane. Functionally, constant region of immunoglobulin heavy chains. Immunoglobulins, also known as antibodies, are membrane-bound or secreted glycoproteins produced by B lymphocytes. In the recognition phase of humoral immunity, the membrane-bound immunoglobulins serve as receptors which, upon binding of a specific antigen, trigger the clonal expansion and differentiation of B lymphocytes into immunoglobulins-secreting plasma cells. Secreted immunoglobulins mediate the effector phase of humoral immunity, which results in the elimination of bound antigens. The antigen binding site is formed by the variable domain of one heavy chain, together with that of its associated light chain. Thus, each immunoglobulin has two antigen binding sites with remarkable affinity for a particular antigen. The variable domains are assembled by a process called V-(D)-J rearrangement and can then be subjected to somatic hypermutations which, after exposure to antigen and selection, allow affinity maturation for a particular antigen. Mediates IgG effector functions on monocytes triggering ADCC of virus-infected cells. The sequence is that of Immunoglobulin heavy constant gamma 1 from Homo sapiens (Human).